Reading from the N-terminus, the 489-residue chain is MKHVPPTVLVWFRNDLRLHDHEPLHRALKSGLAITAVYCYDPRQFAQTHQGFAKTGPWRSNFLQQSVQNLAESLQKVGNKLLVTTGLPEQVIPQIAKQINAKTIYYHREVTQEELDVERNLVKQLTILGIEAKGYWGSTLCHPEDLPFSIQDLPDLFTKFRKDIEKKKISIRPCFFAPSQLLPSPNIKLELTAPPPEFFPQINFDHRSVLAFQGGETAGLARLQDYFWHGDRLKDYKETRNGMVGADYSSKFSPWLALGCLSPRFIYQEVKRYEQERVSNDSTHWLIFELLWRDFFRFVAQKYGNKLFNRGGLLNKNFPWQEDQVRFELWRSGQTGYPLVDANMRELNLTGFMSNRGRQNVASFLCKNLGIDWRWGAEWFESCLIDYDVCSNWGNWNYTAGIGNDARDFRYFNIPKQSQQYDPQGTYLRHWLPELKNLPGDKIHQPWLLSATEQKQWGVQLGVDYPRPCVNFHQSVEARRKIEQMGVIA.

Residues 6-140 (PTVLVWFRND…EAKGYWGSTL (135 aa)) enclose the Photolyase/cryptochrome alpha/beta domain.

Belongs to the DNA photolyase class-1 family. FAD is required as a cofactor. (6R)-5,10-methylene-5,6,7,8-tetrahydrofolate serves as cofactor.

Its function is as follows. May have a photoreceptor function. Binds DNA; represses transcription of at least 8 genes, including slr0364 and slr1866. Does not encode a DNA photolyase function. Its disruption does not affect circadian rhythm. The polypeptide is Cryptochrome DASH (cry) (Synechocystis sp. (strain ATCC 27184 / PCC 6803 / Kazusa)).